We begin with the raw amino-acid sequence, 492 residues long: Glutamyl-tRNA(Gln) amidotransferase subunit A (492 aa).

Residues Lys78 and Ser158 each act as charge relay system in the active site. Ser182 serves as the catalytic Acyl-ester intermediate.

It belongs to the amidase family. GatA subfamily. Heterotrimer of A, B and C subunits.

It carries out the reaction L-glutamyl-tRNA(Gln) + L-glutamine + ATP + H2O = L-glutaminyl-tRNA(Gln) + L-glutamate + ADP + phosphate + H(+). Its function is as follows. Allows the formation of correctly charged Gln-tRNA(Gln) through the transamidation of misacylated Glu-tRNA(Gln) in organisms which lack glutaminyl-tRNA synthetase. The reaction takes place in the presence of glutamine and ATP through an activated gamma-phospho-Glu-tRNA(Gln). The sequence is that of Glutamyl-tRNA(Gln) amidotransferase subunit A from Rickettsia akari (strain Hartford).